Reading from the N-terminus, the 73-residue chain is Putative sodium channel toxin Ts39 (73 aa).

A signal peptide spans 1 to 22 (MKTLNFCLFLVIISSLTVRVFC). Residues 24–73 (NDRFLTVNDNYVICLYINKSFVNCENLCKAYMNAKDGFCRQPHCFCTDVE) enclose the LCN-type CS-alpha/beta domain. Cystine bridges form between Cys-37/Cys-62, Cys-47/Cys-67, and Cys-51/Cys-69.

This sequence belongs to the long (3 C-C) scorpion toxin superfamily. Sodium channel inhibitor family. As to expression, expressed by the venom gland.

It localises to the secreted. In terms of biological role, putative sodium channel toxin. The chain is Putative sodium channel toxin Ts39 from Tityus serrulatus (Brazilian scorpion).